The primary structure comprises 233 residues: Orotidine 5'-phosphate decarboxylase (233 aa).

Substrate is bound by residues D11, K34, 61 to 70 (DLKLHDIPNT), T117, R179, Q188, G208, and R209. Catalysis depends on K63, which acts as the Proton donor.

The protein belongs to the OMP decarboxylase family. Type 1 subfamily. In terms of assembly, homodimer.

The catalysed reaction is orotidine 5'-phosphate + H(+) = UMP + CO2. Its pathway is pyrimidine metabolism; UMP biosynthesis via de novo pathway; UMP from orotate: step 2/2. Functionally, catalyzes the decarboxylation of orotidine 5'-monophosphate (OMP) to uridine 5'-monophosphate (UMP). The chain is Orotidine 5'-phosphate decarboxylase from Streptococcus pneumoniae (strain Hungary19A-6).